A 437-amino-acid chain; its full sequence is UBX domain-containing protein 6 (437 aa).

Disordered stretches follow at residues 1–45 and 89–109; these read MNSF…AQGG and ERRQVEDLNISGTSSLQQPDR. A compositionally biased stretch (basic residues) spans 7–18; it reads FLNKKRVQNHFK. The 73-residue stretch at 179–251 folds into the PUB domain; the sequence is ETAIETICKY…VFTKPSDVHL (73 aa). The region spanning 332 to 409 is the UBX domain; the sequence is YRYKYTLIRV…SLAPAALLHV (78 aa).

In terms of assembly, interacts with cdc-48.1 (via N-terminus) and cdc-48.2 (via N-terminus). As to expression, expressed in the pharynx and some head neurons.

Its function is as follows. Probably acts as an adapter for ATPase cdc-48.1 and/or cdc-48.2, conferring substrate specificity. Involved in the lysosomal clearance of cellular material in diet restricted conditions. The chain is UBX domain-containing protein 6 from Caenorhabditis elegans.